The following is a 224-amino-acid chain: Protein FMP52, mitochondrial (224 aa).

This sequence belongs to the FMP52 family.

It localises to the mitochondrion outer membrane. In Kluyveromyces lactis (strain ATCC 8585 / CBS 2359 / DSM 70799 / NBRC 1267 / NRRL Y-1140 / WM37) (Yeast), this protein is Protein FMP52, mitochondrial (FMP52).